We begin with the raw amino-acid sequence, 247 residues long: Epidermal cell differentiation inhibitor (247 aa).

Positions 1 to 35 (MKNKLLFKIFLSLSLALSVYSINDKIIEVSNTSLA) are cleaved as a signal peptide. The TR mART core domain occupies 39 to 247 (KNFTDLDEAT…IIITAIVFKK (209 aa)). Catalysis depends on residues Arg120, Ser173, and Glu215.

The protein to ADP-ribosyltransferase C3 of Clostridium.

In terms of biological role, inhibits terminal differentiation of cultured mouse keratinocytes. In culture, also inhibits the differentiation of human keratinocytes. Probable ADP-ribosyltransferase. The sequence is that of Epidermal cell differentiation inhibitor from Staphylococcus aureus.